Reading from the N-terminus, the 421-residue chain is 3-isopropylmalate dehydratase large subunit (421 aa).

The [4Fe-4S] cluster site is built by cysteine 301, cysteine 361, and cysteine 364.

It belongs to the aconitase/IPM isomerase family. LeuC type 2 subfamily. As to quaternary structure, heterodimer of LeuC and LeuD. [4Fe-4S] cluster serves as cofactor.

The catalysed reaction is (2R,3S)-3-isopropylmalate = (2S)-2-isopropylmalate. Its pathway is amino-acid biosynthesis; L-leucine biosynthesis; L-leucine from 3-methyl-2-oxobutanoate: step 2/4. Its function is as follows. Catalyzes the isomerization between 2-isopropylmalate and 3-isopropylmalate, via the formation of 2-isopropylmaleate. The polypeptide is 3-isopropylmalate dehydratase large subunit (Desulfitobacterium hafniense (strain Y51)).